Reading from the N-terminus, the 864-residue chain is DNA mismatch repair protein MutS (864 aa).

Residue 607–614 (GPNMGGKS) participates in ATP binding.

The protein belongs to the DNA mismatch repair MutS family.

In terms of biological role, this protein is involved in the repair of mismatches in DNA. It is possible that it carries out the mismatch recognition step. This protein has a weak ATPase activity. The chain is DNA mismatch repair protein MutS from Neisseria meningitidis serogroup C / serotype 2a (strain ATCC 700532 / DSM 15464 / FAM18).